The primary structure comprises 318 residues: MMLVLRFANLYVEPMAIFLIFLNAFIWSSSFALSKSAMDAASPLFVTGSRMVLAGIVLFGLLLFKRESFRLPRQAVMPIVLLSVIGFYLTNVLEFIGLQGLSSSKACFIYGFSPFTAAFCSYVQLREVVTWKKLGGLSLGLVSYLVYLLFGGGEDVSEWGWQLGMPELLLIVATCLSSYGWTLLRKLERQCESLSITAINAYAMVIAGILSLAHSAITEVWNPLPVENPVLFLQSIGALVIFSNLICYNLFAKLLRSFSSTFLSFCNLVMPLFASFFGWLLLGESFPPGLLFAVGFMVLGCRLIYHEEFRQGYVLSSE.

The next 10 membrane-spanning stretches (helical) occupy residues 7-27, 44-64, 76-96, 105-125, 134-154, 163-183, 193-213, 231-251, 262-282, and 285-305; these read FANL…AFIW, LFVT…LLLF, VMPI…LEFI, KACF…YVQL, LGGL…GGGE, LGMP…GWTL, SLSI…LSLA, LFLQ…YNLF, FLSF…WLLL, and SFPP…RLIY. In terms of domain architecture, EamA 1 spans 25–148; sequence FIWSSSFALS…LGLVSYLVYL (124 aa). One can recognise an EamA 2 domain in the interval 191-304; that stretch reads CESLSITAIN…GFMVLGCRLI (114 aa).

The protein belongs to the drug/metabolite transporter (DMT) superfamily. 10 TMS drug/metabolite exporter (DME) (TC 2.A.7.3) family.

Its subcellular location is the cell membrane. Its function is as follows. Transports S-adenosylmethionine (SAM) and S-adenosylhomocysteine (SAH). Allows bacteria to acquire SAM from the eukaryotic host cell and to likely remove the toxic by-product SAH. This chain is S-adenosylmethionine/S-adenosylhomocysteine transporter, found in Chlamydia muridarum (strain MoPn / Nigg).